The following is a 277-amino-acid chain: Probable septum site-determining protein MinC (277 aa).

The tract at residues 137-164 is disordered; the sequence is ATTGNAPAEPAPAEPAAPAAAPQPPAVP. Over residues 145–164 the composition is skewed to pro residues; sequence EPAPAEPAAPAAAPQPPAVP.

The protein belongs to the MinC family. In terms of assembly, interacts with MinD and FtsZ.

Functionally, cell division inhibitor that blocks the formation of polar Z ring septums. Rapidly oscillates between the poles of the cell to destabilize FtsZ filaments that have formed before they mature into polar Z rings. Prevents FtsZ polymerization. The sequence is that of Probable septum site-determining protein MinC from Bordetella petrii (strain ATCC BAA-461 / DSM 12804 / CCUG 43448).